The primary structure comprises 486 residues: NADH-quinone oxidoreductase subunit N (486 aa).

14 helical membrane-spanning segments follow: residues 8–28 (LTAL…ILSI), 36–56 (FVAV…YFLI), 74–94 (ILYI…SYPW), 104–124 (EFYL…ISHH), 125–145 (MASF…LIAY), 160–180 (IILS…VYSI), 201–221 (ILVV…KLSI), 239–259 (VLSF…LNFL), 269–289 (VIYF…NLMA), 298–318 (FLGY…LVSH), 329–349 (AIYL…VNLI), 376–396 (SVLT…GFIG), 410–432 (WLIG…RIIL), and 459–479 (IVIC…NPLI).

It belongs to the complex I subunit 2 family. As to quaternary structure, NDH-1 is composed of 13 different subunits. Subunits NuoA, H, J, K, L, M, N constitute the membrane sector of the complex.

The protein resides in the cell membrane. It carries out the reaction a quinone + NADH + 5 H(+)(in) = a quinol + NAD(+) + 4 H(+)(out). In terms of biological role, NDH-1 shuttles electrons from NADH, via FMN and iron-sulfur (Fe-S) centers, to quinones in the respiratory chain. The immediate electron acceptor for the enzyme in this species is believed to be ubiquinone. Couples the redox reaction to proton translocation (for every two electrons transferred, four hydrogen ions are translocated across the cytoplasmic membrane), and thus conserves the redox energy in a proton gradient. In Buchnera aphidicola subsp. Acyrthosiphon pisum (strain APS) (Acyrthosiphon pisum symbiotic bacterium), this protein is NADH-quinone oxidoreductase subunit N.